A 230-amino-acid chain; its full sequence is Large ribosomal subunit protein uL1 (230 aa).

Belongs to the universal ribosomal protein uL1 family. As to quaternary structure, part of the 50S ribosomal subunit.

Functionally, binds directly to 23S rRNA. The L1 stalk is quite mobile in the ribosome, and is involved in E site tRNA release. Its function is as follows. Protein L1 is also a translational repressor protein, it controls the translation of the L11 operon by binding to its mRNA. This chain is Large ribosomal subunit protein uL1, found in Desulfitobacterium hafniense (strain DSM 10664 / DCB-2).